A 190-amino-acid polypeptide reads, in one-letter code: Threonylcarbamoyl-AMP synthase (190 aa).

In terms of domain architecture, YrdC-like spans 8-190 (RFRIRQCAAR…DAESGAVIRA (183 aa)).

This sequence belongs to the SUA5 family. TsaC subfamily.

It localises to the cytoplasm. The catalysed reaction is L-threonine + hydrogencarbonate + ATP = L-threonylcarbamoyladenylate + diphosphate + H2O. Required for the formation of a threonylcarbamoyl group on adenosine at position 37 (t(6)A37) in tRNAs that read codons beginning with adenine. Catalyzes the conversion of L-threonine, HCO(3)(-)/CO(2) and ATP to give threonylcarbamoyl-AMP (TC-AMP) as the acyladenylate intermediate, with the release of diphosphate. In Alkalilimnicola ehrlichii (strain ATCC BAA-1101 / DSM 17681 / MLHE-1), this protein is Threonylcarbamoyl-AMP synthase.